The following is a 348-amino-acid chain: MIEADRLIAASGRDREEVQDRAIRPLRLDEYIGQPVVREQMALFIQAARGRNESLDHTLIFGPPGLGKTTLANIIAQEMGVSVKSTSGPILERPGDLAAMLTNLEPHDVLFIDEIHRLSPVVEEVLYPAMEDFQLDIMIGEGPAARSIKLDLPPFTLVGATTRAGMLTNPLRDRFGIVQRLEFYSDKDLATIVSRSANILGLVIEDQGAYEIARRARGTPRIANRLLRRVRDYAEVRGKGQITKAVADLALNLLDVDERGFDHSDRRLLLTMIEKFDGGPVGVDNLAAAISEERHTIEDVLEPYLIQQGYIMRTPRGRVVTRHAYLHFGLNVPGRLGEGADFSEAGDE.

The interval 4-184 is large ATPase domain (RuvB-L); sequence ADRLIAASGR…FGIVQRLEFY (181 aa). Residues Ile23, Arg24, Gly65, Lys68, Thr69, Thr70, 131–133, Arg174, Tyr184, and Arg221 contribute to the ATP site; that span reads EDF. Mg(2+) is bound at residue Thr69. The segment at 185 to 255 is small ATPAse domain (RuvB-S); it reads SDKDLATIVS…VADLALNLLD (71 aa). The tract at residues 258 to 348 is head domain (RuvB-H); the sequence is ERGFDHSDRR…GADFSEAGDE (91 aa). DNA contacts are provided by Arg294, Arg313, and Arg318.

Belongs to the RuvB family. As to quaternary structure, homohexamer. Forms an RuvA(8)-RuvB(12)-Holliday junction (HJ) complex. HJ DNA is sandwiched between 2 RuvA tetramers; dsDNA enters through RuvA and exits via RuvB. An RuvB hexamer assembles on each DNA strand where it exits the tetramer. Each RuvB hexamer is contacted by two RuvA subunits (via domain III) on 2 adjacent RuvB subunits; this complex drives branch migration. In the full resolvosome a probable DNA-RuvA(4)-RuvB(12)-RuvC(2) complex forms which resolves the HJ.

The protein resides in the cytoplasm. The enzyme catalyses ATP + H2O = ADP + phosphate + H(+). Its function is as follows. The RuvA-RuvB-RuvC complex processes Holliday junction (HJ) DNA during genetic recombination and DNA repair, while the RuvA-RuvB complex plays an important role in the rescue of blocked DNA replication forks via replication fork reversal (RFR). RuvA specifically binds to HJ cruciform DNA, conferring on it an open structure. The RuvB hexamer acts as an ATP-dependent pump, pulling dsDNA into and through the RuvAB complex. RuvB forms 2 homohexamers on either side of HJ DNA bound by 1 or 2 RuvA tetramers; 4 subunits per hexamer contact DNA at a time. Coordinated motions by a converter formed by DNA-disengaged RuvB subunits stimulates ATP hydrolysis and nucleotide exchange. Immobilization of the converter enables RuvB to convert the ATP-contained energy into a lever motion, pulling 2 nucleotides of DNA out of the RuvA tetramer per ATP hydrolyzed, thus driving DNA branch migration. The RuvB motors rotate together with the DNA substrate, which together with the progressing nucleotide cycle form the mechanistic basis for DNA recombination by continuous HJ branch migration. Branch migration allows RuvC to scan DNA until it finds its consensus sequence, where it cleaves and resolves cruciform DNA. The polypeptide is Holliday junction branch migration complex subunit RuvB (Pseudomonas putida (strain W619)).